Consider the following 263-residue polypeptide: 5'-nucleotidase SurE (263 aa).

Residues Asp10, Asp11, Ser41, and Asn95 each coordinate a divalent metal cation.

It belongs to the SurE nucleotidase family. It depends on a divalent metal cation as a cofactor.

The protein localises to the cytoplasm. It carries out the reaction a ribonucleoside 5'-phosphate + H2O = a ribonucleoside + phosphate. In terms of biological role, nucleotidase that shows phosphatase activity on nucleoside 5'-monophosphates. The chain is 5'-nucleotidase SurE from Methanoculleus marisnigri (strain ATCC 35101 / DSM 1498 / JR1).